The sequence spans 373 residues: Trifolitoxin-processing protein TfxB (373 aa).

To E.coli McbC which is involved in the processing of microcin B17 (MCCB17).

It is found in the cytoplasm. In terms of biological role, the actions of the proteins TfxB, TfxD and TfxF are implicated in the processing of the inactive trifolitoxin (TfxA) precursor into the active peptide. In Rhizobium leguminosarum bv. trifolii, this protein is Trifolitoxin-processing protein TfxB (tfxB).